Reading from the N-terminus, the 487-residue chain is Chromosomal replication initiator protein DnaA (487 aa).

The interval 1–79 is domain I, interacts with DnaA modulators; the sequence is MPNSMWHQCL…QAPRVMMKVG (79 aa). Residues 78-138 are disordered; it reads VGSAPKPTDP…PAPKAQAERR (61 aa). The segment at 79 to 150 is domain II; that stretch reads GSAPKPTDPV…QVEGDIKHQS (72 aa). Residues 151-367 are domain III, AAA+ region; sequence FLNETFTFDT…GALRLVIANA (217 aa). Residues Gly195, Gly197, Lys198, and Thr199 each contribute to the ATP site. The tract at residues 368–487 is domain IV, binds dsDNA; that stretch reads HFTGSEITPP…YQNFMRLLTT (120 aa).

This sequence belongs to the DnaA family. In terms of assembly, oligomerizes as a right-handed, spiral filament on DNA at oriC.

It localises to the cytoplasm. In terms of biological role, plays an essential role in the initiation and regulation of chromosomal replication. ATP-DnaA binds to the origin of replication (oriC) to initiate formation of the DNA replication initiation complex once per cell cycle. Binds the DnaA box (a 9 base pair repeat at the origin) and separates the double-stranded (ds)DNA. Forms a right-handed helical filament on oriC DNA; dsDNA binds to the exterior of the filament while single-stranded (ss)DNA is stabiized in the filament's interior. The ATP-DnaA-oriC complex binds and stabilizes one strand of the AT-rich DNA unwinding element (DUE), permitting loading of DNA polymerase. After initiation quickly degrades to an ADP-DnaA complex that is not apt for DNA replication. Binds acidic phospholipids. In Marinobacter nauticus (strain ATCC 700491 / DSM 11845 / VT8) (Marinobacter aquaeolei), this protein is Chromosomal replication initiator protein DnaA.